An 859-amino-acid polypeptide reads, in one-letter code: Photoactivated adenylate cyclase subunit beta-like protein FB (859 aa).

One can recognise a BLUF 1 domain in the interval 56–149 (LRRLMYLSKS…GRMYGDWHMK (94 aa)). In terms of domain architecture, Guanylate cyclase 1 spans 205–333 (VVTFIYLVEF…DCINTTSRIA (129 aa)). The interval 414–449 (GLPNSQRPPIFDDTPKANRRPRTPGYGGRQRSDSQV) is disordered. Positions 471 to 563 (LTTLTYISQA…RVYPSEWTLT (93 aa)) constitute a BLUF 2 domain. The Guanylate cyclase 2 domain maps to 619 to 748 (VMLATDICSF…AVSARVMEVE (130 aa)). A disordered region spans residues 813-859 (AARSGEKPLTEPEAAKPDFRVSPGRVRHGDSGRRSNSAQGKRSIQVR). A compositionally biased stretch (basic and acidic residues) spans 815–831 (RSGEKPLTEPEAAKPDF). Residues 846–859 (RSNSAQGKRSIQVR) are compositionally biased toward polar residues.

This sequence belongs to the adenylyl cyclase class-4/guanylyl cyclase family. In terms of assembly, heterotetramer of two alpha and two beta subunits.

The protein localises to the cell projection. The protein resides in the cilium. It is found in the flagellum. The polypeptide is Photoactivated adenylate cyclase subunit beta-like protein FB (Euglena gracilis).